Here is a 148-residue protein sequence, read N- to C-terminus: UPAR/Ly6 domain-containing protein bero (148 aa).

Residues 1–23 (MVSALKCSLAVAVMISLACSAYA) form the signal peptide. 5 disulfides stabilise this stretch: Cys-26–Cys-72, Cys-29–Cys-37, Cys-51–Cys-90, Cys-102–Cys-116, and Cys-119–Cys-124. Asn-68 is a glycosylation site (N-linked (GlcNAc...) asparagine). Residue Asn-125 is glycosylated (N-linked (GlcNAc...) asparagine). A lipid anchor (GPI-anchor amidated asparagine) is attached at Asn-125. Positions 126 to 148 (GSSSLAPIAGAILLFFGVARLLA) are cleaved as a propeptide — removed in mature form. The helical transmembrane segment at 128–148 (SSLAPIAGAILLFFGVARLLA) threads the bilayer.

Belongs to the quiver family.

Its subcellular location is the cell membrane. The protein resides in the membrane. It is found in the perikaryon. It localises to the cell projection. The protein localises to the neuron projection. In terms of biological role, necessary for the maintenance of persistent fluctuating activities and suppression of acute evoked activities in abdominal leucokinin-producing (ABLK) neurons to negatively regulate neuron excitability involved in nociceptive (perception of pain) behavioral responses. This Drosophila melanogaster (Fruit fly) protein is UPAR/Ly6 domain-containing protein bero.